The following is a 219-amino-acid chain: Holliday junction branch migration complex subunit RuvA (219 aa).

Positions methionine 1–serine 71 are domain I. Residues threonine 72–asparagine 150 form a domain II region. Residues isoleucine 151 to leucine 161 are flexible linker. Residues leucine 161–lysine 219 form a domain III region.

The protein belongs to the RuvA family. In terms of assembly, homotetramer. Forms an RuvA(8)-RuvB(12)-Holliday junction (HJ) complex. HJ DNA is sandwiched between 2 RuvA tetramers; dsDNA enters through RuvA and exits via RuvB. An RuvB hexamer assembles on each DNA strand where it exits the tetramer. Each RuvB hexamer is contacted by two RuvA subunits (via domain III) on 2 adjacent RuvB subunits; this complex drives branch migration. In the full resolvosome a probable DNA-RuvA(4)-RuvB(12)-RuvC(2) complex forms which resolves the HJ.

The protein localises to the cytoplasm. Its function is as follows. The RuvA-RuvB-RuvC complex processes Holliday junction (HJ) DNA during genetic recombination and DNA repair, while the RuvA-RuvB complex plays an important role in the rescue of blocked DNA replication forks via replication fork reversal (RFR). RuvA specifically binds to HJ cruciform DNA, conferring on it an open structure. The RuvB hexamer acts as an ATP-dependent pump, pulling dsDNA into and through the RuvAB complex. HJ branch migration allows RuvC to scan DNA until it finds its consensus sequence, where it cleaves and resolves the cruciform DNA. This chain is Holliday junction branch migration complex subunit RuvA, found in Prochlorococcus marinus subsp. pastoris (strain CCMP1986 / NIES-2087 / MED4).